The chain runs to 488 residues: Ribulose bisphosphate carboxylase large chain (488 aa).

Asn-127 and Thr-177 together coordinate substrate. The active-site Proton acceptor is the Lys-179. Lys-181 is a binding site for substrate. Mg(2+) contacts are provided by Lys-205, Asp-207, and Glu-208. Residue Lys-205 is modified to N6-carboxylysine. His-297 acts as the Proton acceptor in catalysis. Residues Arg-298, His-330, and Ser-382 each coordinate substrate.

Belongs to the RuBisCO large chain family. Type I subfamily. Heterohexadecamer of 8 large chains and 8 small chains. Mg(2+) is required as a cofactor.

Its subcellular location is the plastid. The protein resides in the chloroplast. It carries out the reaction 2 (2R)-3-phosphoglycerate + 2 H(+) = D-ribulose 1,5-bisphosphate + CO2 + H2O. The enzyme catalyses D-ribulose 1,5-bisphosphate + O2 = 2-phosphoglycolate + (2R)-3-phosphoglycerate + 2 H(+). Functionally, ruBisCO catalyzes two reactions: the carboxylation of D-ribulose 1,5-bisphosphate, the primary event in carbon dioxide fixation, as well as the oxidative fragmentation of the pentose substrate in the photorespiration process. Both reactions occur simultaneously and in competition at the same active site. The chain is Ribulose bisphosphate carboxylase large chain from Cyanidioschyzon merolae (strain NIES-3377 / 10D) (Unicellular red alga).